Here is a 999-residue protein sequence, read N- to C-terminus: Sarcoplasmic/endoplasmic reticulum calcium ATPase 3 (999 aa).

An N-acetylmethionine modification is found at Met-1. Over 1 to 48 (MEEAHLLPAADVLRRFSVTAEGGLSPAQVTRARERYGPNELPTEEGKS) the chain is Cytoplasmic. Residue Ser-17 is modified to Phosphoserine. Residue Thr-19 is modified to Phosphothreonine. Residue Ser-25 is modified to Phosphoserine. A helical membrane pass occupies residues 49–69 (LWELVLEQFEDLLVRILLLAA). The Extracellular segment spans residues 70–89 (LVSFVLACFEEGEETTTAFV). The helical transmembrane segment at 90-110 (EPLVIVLILVANAVVGVWQER) threads the bilayer. Topologically, residues 111-253 (NAENAIEALK…PERTPLQQKL (143 aa)) are cytoplasmic. The chain crosses the membrane as a helical span at residues 254-273 (DEFGRQLSRAISVICMAVWV). Residues 274–295 (INIGHFADPAHGGSWLRGAVYY) are Extracellular-facing. Residues 296–313 (FKIAVALAVAAIPEGLPA) traverse the membrane as a helical segment. Residues Val-304, Ala-305, Ile-307, and Glu-309 each coordinate Ca(2+). Residues 314–757 (VITTCLALGT…EEGRAIYSNM (444 aa)) are Cytoplasmic-facing. The active-site 4-aspartylphosphate intermediate is the Asp-351. Positions 351 and 353 each coordinate Mg(2+). Position 353 (Thr-353) interacts with ATP. The tract at residues 370–400 (AEAEAGTCRLHEFTISGTTYAPEGEVRQGEQ) is interaction with phospholamban 1. At Thr-415 the chain carries Phosphothreonine. Residues Glu-442, Arg-489, Lys-515, Arg-560, Thr-625, Gly-626, and Asp-627 each coordinate ATP. Ser-662 carries the post-translational modification Phosphoserine. ATP contacts are provided by Arg-678 and Lys-684. A Mg(2+)-binding site is contributed by Asp-703. Asn-706 provides a ligand contact to ATP. A helical membrane pass occupies residues 758 to 777 (KQFIRYLISSNVGEVVCIFL). Residues Asn-768 and Glu-771 each coordinate Ca(2+). Residues 778-787 (TAILGLPEAL) are Extracellular-facing. Residues 788-808 (IPVQLLWVNLVTDGLPATALG) traverse the membrane as a helical segment. The interaction with phospholamban 2 stretch occupies residues 788–808 (IPVQLLWVNLVTDGLPATALG). Positions 796, 799, and 800 each coordinate Ca(2+). The Cytoplasmic portion of the chain corresponds to 809 to 828 (FNPPDLDIMEKRPRNPREAL). A helical transmembrane segment spans residues 829–851 (ISGWLFFRYLAIGVYVGLATVAA). Over 852–897 (ATWWFLYDAEGPQVTFYQLRNFLKCSEDNPLFTGTDCEVFESRFPT) the chain is Extracellular. The cysteines at positions 876 and 888 are disulfide-linked. Residues 898–917 (TMALSVLVTTEMCNALNSVS) traverse the membrane as a helical segment. Glu-908 is a Ca(2+) binding site. The Cytoplasmic segment spans residues 918 to 930 (ENQSLLRMPPWLN). The chain crosses the membrane as a helical span at residues 931-949 (PWLLAAVAMSMALHFLILL). Residues 950–964 (VPPLPLIFQVTPLSG) lie on the Extracellular side of the membrane. Residues 965-985 (RQWVVVLQISLPVILLDEALK) form a helical membrane-spanning segment. The Cytoplasmic portion of the chain corresponds to 986 to 999 (YLSRKHVDEEKGRQ).

The protein belongs to the cation transport ATPase (P-type) (TC 3.A.3) family. Type IIA subfamily. In terms of assembly, interacts with sarcolipin (SLN). Interacts with phospholamban (PLN). Interacts with myoregulin (MRLN). Interacts with DWORF. Interacts with VMP1. Interacts with TUNAR; the interaction occurs at low levels in low glucose conditions and is increased by high glucose levels. Requires Mg(2+) as cofactor. Expressed in endothelial tissues.

It is found in the endoplasmic reticulum membrane. The protein resides in the sarcoplasmic reticulum membrane. The enzyme catalyses Ca(2+)(in) + ATP + H2O = Ca(2+)(out) + ADP + phosphate + H(+). Inhibited by sarcolipin (SLN), phospholamban (PLN) and myoregulin (MRLN). Enhanced by DWORF; DWORF increases activity by displacing sarcolipin (SLN), phospholamban (PLN) and myoregulin (MRLN). This magnesium-dependent enzyme catalyzes the hydrolysis of ATP coupled with the transport of calcium. Transports calcium ions from the cytosol into the sarcoplasmic/endoplasmic reticulum lumen. Contributes to calcium sequestration involved in muscular excitation/contraction. The chain is Sarcoplasmic/endoplasmic reticulum calcium ATPase 3 (ATP2A3) from Sus scrofa (Pig).